The following is a 200-amino-acid chain: uncharacterized protein (200 aa).

This is an uncharacterized protein from Haemophilus phage HP1 (strain HP1c1) (Bacteriophage HP1).